The primary structure comprises 342 residues: Cell cycle control protein 50C (342 aa).

The Cytoplasmic portion of the chain corresponds to 1–33 (MEMMPQYDLSRLPENTALKQQTLPTQQLNLSAS). The chain crosses the membrane as a helical span at residues 34 to 54 (VVLSIFFITGGFCLSIGIILL). Residues 55–306 (LSAKSTKKIE…STLTWIGGGG (252 aa)) are Extracellular-facing. Residues Asn66, Asn80, Asn89, and Asn205 are each glycosylated (N-linked (GlcNAc...) asparagine). A helical transmembrane segment spans residues 307–327 (LFLGLTYTVTGALTLLASFAI). Residues 328 to 342 (LTIHLMLKRSKLNFL) lie on the Cytoplasmic side of the membrane.

Belongs to the CDC50/LEM3 family. As to expression, specifically expressed in testis.

Its subcellular location is the membrane. The protein is Cell cycle control protein 50C (Tmem30c) of Mus musculus (Mouse).